A 461-amino-acid chain; its full sequence is SWM histone demethylase complex subunit phf1 (461 aa).

The disordered stretch occupies residues 79–130 (PYGGMTMPASSSSGATSVPPEQDPSLSVSFNRLPKSASTKTKNGRIRSSRRE). Residues 102–119 (PSLSVSFNRLPKSASTKT) show a composition bias toward polar residues. The PHD-type zinc-finger motif lies at 190–246 (VTLCSVCQRGHSPLSNRIVFCDGCNSPYHQLCHHPPIDDATVQDVDAEWFCMKCQYR).

In terms of assembly, component of the SWM histone demethylase complex composed of at least lsd1, lsd2, phf1 and phf2.

The protein resides in the nucleus. In terms of biological role, component of the SWM histone demethylase complex that specifically demethylates H3K9me2, a specific tag for epigenetic transcriptional activation, thereby acting as a corepressor. Has a role in regulating heterochromatin propagation and euchromatic transcription. The sequence is that of SWM histone demethylase complex subunit phf1 (phf1) from Schizosaccharomyces pombe (strain 972 / ATCC 24843) (Fission yeast).